We begin with the raw amino-acid sequence, 207 residues long: Large ribosomal subunit protein uL4 (207 aa).

The tract at residues 48–86 is disordered; it reads THKVKNRSEVRGGGRKPWRQKGTGRARQGSIRSPQWRGG. Positions 60-71 are enriched in basic residues; the sequence is GGRKPWRQKGTG.

It belongs to the universal ribosomal protein uL4 family. As to quaternary structure, part of the 50S ribosomal subunit.

Functionally, one of the primary rRNA binding proteins, this protein initially binds near the 5'-end of the 23S rRNA. It is important during the early stages of 50S assembly. It makes multiple contacts with different domains of the 23S rRNA in the assembled 50S subunit and ribosome. Its function is as follows. Forms part of the polypeptide exit tunnel. In Bacillus licheniformis (strain ATCC 14580 / DSM 13 / JCM 2505 / CCUG 7422 / NBRC 12200 / NCIMB 9375 / NCTC 10341 / NRRL NRS-1264 / Gibson 46), this protein is Large ribosomal subunit protein uL4.